A 371-amino-acid polypeptide reads, in one-letter code: Putative 26S proteasome regulatory subunit homolog MJ1494 (371 aa).

161–168 (GPPGTGKT) contacts ATP.

This sequence belongs to the AAA ATPase family.

Its function is as follows. The 26S proteasome is involved in the ATP-dependent degradation of ubiquitinated proteins. The regulatory (or ATPase) complex confers ATP dependency and substrate specificity to the 26S complex. This Methanocaldococcus jannaschii (strain ATCC 43067 / DSM 2661 / JAL-1 / JCM 10045 / NBRC 100440) (Methanococcus jannaschii) protein is Putative 26S proteasome regulatory subunit homolog MJ1494.